The following is a 402-amino-acid chain: Acetate kinase (402 aa).

Residue asparagine 7 coordinates Mg(2+). Lysine 14 is a binding site for ATP. Arginine 95 serves as a coordination point for substrate. The active-site Proton donor/acceptor is aspartate 152. ATP-binding positions include 212–216 (HLGNG), 286–288 (DMR), and 334–338 (GIGEN). Residue glutamate 388 participates in Mg(2+) binding.

It belongs to the acetokinase family. In terms of assembly, homodimer. It depends on Mg(2+) as a cofactor. Requires Mn(2+) as cofactor.

It is found in the cytoplasm. The catalysed reaction is acetate + ATP = acetyl phosphate + ADP. It participates in metabolic intermediate biosynthesis; acetyl-CoA biosynthesis; acetyl-CoA from acetate: step 1/2. In terms of biological role, catalyzes the formation of acetyl phosphate from acetate and ATP. Can also catalyze the reverse reaction. In Nitratidesulfovibrio vulgaris (strain DP4) (Desulfovibrio vulgaris), this protein is Acetate kinase.